A 506-amino-acid chain; its full sequence is NAD(P)H-quinone oxidoreductase chain 4, chloroplastic (506 aa).

Helical transmembrane passes span 5–25 (FPLL…IPFL), 35–55 (WYTL…FIYK), 88–108 (MPLI…AWPI), 114–134 (LFYF…LSQD), 135–155 (ILLF…LLSL), 168–188 (FILY…TMAF), 209–229 (ALEI…LPAF), 243–263 (HYST…YGLI), 275–295 (VIFS…GALT), 309–329 (SSIS…DLGL), 331–351 (GAMM…FLAG), 386–406 (SLAL…LGFL), 415–435 (FIAL…IYLL), and 463–483 (IFIM…PNLT).

Belongs to the complex I subunit 4 family.

The protein localises to the plastid. It localises to the chloroplast thylakoid membrane. It carries out the reaction a plastoquinone + NADH + (n+1) H(+)(in) = a plastoquinol + NAD(+) + n H(+)(out). The catalysed reaction is a plastoquinone + NADPH + (n+1) H(+)(in) = a plastoquinol + NADP(+) + n H(+)(out). The polypeptide is NAD(P)H-quinone oxidoreductase chain 4, chloroplastic (Chaetosphaeridium globosum (Charophycean green alga)).